We begin with the raw amino-acid sequence, 173 residues long: Shikimate kinase (173 aa).

11–16 (GAGKTT) lines the ATP pocket. Thr-15 contributes to the Mg(2+) binding site. Asp-33, Arg-57, and Gly-79 together coordinate substrate. Position 118 (Arg-118) interacts with ATP. Arg-140 serves as a coordination point for substrate.

The protein belongs to the shikimate kinase family. As to quaternary structure, monomer. It depends on Mg(2+) as a cofactor.

It localises to the cytoplasm. The catalysed reaction is shikimate + ATP = 3-phosphoshikimate + ADP + H(+). It functions in the pathway metabolic intermediate biosynthesis; chorismate biosynthesis; chorismate from D-erythrose 4-phosphate and phosphoenolpyruvate: step 5/7. In terms of biological role, catalyzes the specific phosphorylation of the 3-hydroxyl group of shikimic acid using ATP as a cosubstrate. In Parabacteroides distasonis (strain ATCC 8503 / DSM 20701 / CIP 104284 / JCM 5825 / NCTC 11152), this protein is Shikimate kinase.